Consider the following 342-residue polypeptide: Photosystem II assembly lipoprotein Ycf48 (342 aa).

The signal sequence occupies residues 1-28 (MPVKFPSLKFEQLKQLVLVAAIAVFCVS). Cys29 carries the N-palmitoyl cysteine lipid modification. The S-diacylglycerol cysteine moiety is linked to residue Cys29. Residues 196-220 (RGNFYSTWAPGQTEWTPHNRNSSRR) carry the Arg-rich patch motif. A propeptide spanning residues 340-342 (MVP) is cleaved from the precursor.

It belongs to the Ycf48 family. Part of early PSII assembly complexes which includes D1 (psbA) and PsbI; not found in mature PSII. By two-hybrid analysis in yeast interacts with precursor and intermediate forms of D1, but less with mature D1. Binds to the lumenal side of PSI and PSII complexes. Coimmunoprecipitates with YidC. Purified chlorophyll- and carotenoid-containing photosystem II (PSII) assembly intermediate complex RCII* (iD1, D1, D2, PsbE, PsbF, PsbI, Ycf39, Ycf48, HliC and HliD). Post-translationally, the last 3 residues are removed in the mature protein.

Its subcellular location is the cellular thylakoid membrane. Its function is as follows. A factor required for optimal assembly of photosystem II (PSII) which acts in the early stages of PSII assembly. Also plays a role in replacement of photodamaged D1 (psbA). May interact with precursor D1 to prevent its premature processing before association with D2 (psbD). May also play a role in chlorophyll insertion into chlorophyll-binding proteins. Increasing levels of chlorophyll precursors partially suppresses deletion of this protein, supporting the idea that Ycf48 assists YidC in synthesis of chlorophyll-binding proteins. The Ycf39-Hlip complex binds D1 at an early stage of PSII assembly along with Ycf48, ribosomes and ChlG, the last enzyme in chlorophyll biosynthesis; it may be involved in chlorophyll reuse and delivery to D1 in the initial stages of PSII assembly. The polypeptide is Photosystem II assembly lipoprotein Ycf48 (Synechocystis sp. (strain ATCC 27184 / PCC 6803 / Kazusa)).